The sequence spans 565 residues: Efflux pump aunC (565 aa).

Over residues 1-14 (MSDTARISGGSFTS) the composition is skewed to polar residues. Residues 1-57 (MSDTARISGGSFTSPPGRDVELNSFKEASQTRLYPYSSRKEEEGREDEQQRPEREED) are disordered. Residues 38–54 (SRKEEEGREDEQQRPER) are compositionally biased toward basic and acidic residues. The next 14 membrane-spanning stretches (helical) occupy residues 59–79 (GALT…CIFC), 103–123 (DVGW…LPFG), 128–148 (FFPI…GSFI), 164–184 (VAGL…TQCV), 194–214 (GFIM…GGAF), 222–242 (WCFY…FFTF), 257–277 (AAGL…CLLL), 293–313 (IIAL…LQLW), 335–355 (LYGF…PIWF), 378–398 (VIFA…GPFM), 399–419 (LLSA…HPSS), 425–445 (IGYQ…PVFV), 457–477 (TATA…VSVA), and 530–550 (VHTF…ATVI).

The protein belongs to the major facilitator superfamily. TCR/Tet family.

The protein localises to the cell membrane. In terms of biological role, efflux pump; part of the gene cluster that mediates the biosynthesis of aurasperone B, a dimeric gamma-naphthopyrone. This chain is Efflux pump aunC, found in Aspergillus niger (strain ATCC MYA-4892 / CBS 513.88 / FGSC A1513).